We begin with the raw amino-acid sequence, 1609 residues long: Transmembrane protein 131-like (1609 aa).

The first 40 residues, 1 to 40 (MAGLRRPQPGCYCRTAAAVNLLLGVFQVLLPCCRPGGAQG), serve as a signal peptide directing secretion. Residues 41 to 869 (QAIEPLPNVV…VVPGPSWEES (829 aa)) are Extracellular-facing. N-linked (GlcNAc...) asparagine glycosylation is found at Asn343, Asn439, Asn522, Asn593, Asn709, and Asn846. The required for Wnt-signaling inhibition and LRP6 degradation stretch occupies residues 696–916 (DYGKVTSLIL…QNASSSSQQN (221 aa)). Residues 870–890 (FWRLTVFFVSLSLLGVILIAF) form a helical membrane-spanning segment. Residues 891 to 1609 (QQAQYILMEF…SRDSSYCGNV (719 aa)) lie on the Cytoplasmic side of the membrane. Disordered regions lie at residues 946–974 (RGKN…YGHS), 991–1014 (TAAA…SSLP), 1108–1144 (KTSK…NQQV), 1159–1178 (VDTK…EDMF), and 1304–1340 (SSSD…PMVD). Over residues 952-961 (PVNTPQSRIQ) the composition is skewed to polar residues. Low complexity predominate over residues 991-1000 (TAAASSTSTT). Residue Ser1122 is modified to Phosphoserine. Positions 1304–1331 (SSSDCGSSSGSVRASRGSWGSWSSTSSS) are enriched in low complexity.

It belongs to the TMEM131 family. Expressed in thymocytes.

It localises to the cell membrane. It is found in the cytoplasm. The protein localises to the endoplasmic reticulum. Functionally, membrane-associated form that antagonizes canonical Wnt signaling by triggering lysosome-dependent degradation of Wnt-activated LRP6. Regulates thymocyte proliferation. In Homo sapiens (Human), this protein is Transmembrane protein 131-like.